The following is a 414-amino-acid chain: Na(+)-translocating NADH-quinone reductase subunit B (414 aa).

4 helical membrane-spanning segments follow: residues 23–40 (WFALYEAAATLFYTPGLV), 56–76 (IMIMVWFAVFPAMFWGMYNAG), 129–149 (FLPIYATVFLVGGFWEVLFCM), and 164–184 (ILFALIVPPTLPLWQAALGIT). T236 carries the post-translational modification FMN phosphoryl threonine. A run of 5 helical transmembrane segments spans residues 268–288 (IPGSIGEVSTLALLIGAAMIV), 297–317 (IIAGVMIGMIVVSTLFNVIGS), 322–342 (MFSMPWHWHLVLGGFAFGMFF), 358–378 (WWYGILIGAMCVMIRVVNPAY), and 381–401 (GMMLAILFANLFAPLFDHLVV).

It belongs to the NqrB/RnfD family. In terms of assembly, composed of six subunits; NqrA, NqrB, NqrC, NqrD, NqrE and NqrF. It depends on FMN as a cofactor.

The protein localises to the cell inner membrane. The enzyme catalyses a ubiquinone + n Na(+)(in) + NADH + H(+) = a ubiquinol + n Na(+)(out) + NAD(+). Its function is as follows. NQR complex catalyzes the reduction of ubiquinone-1 to ubiquinol by two successive reactions, coupled with the transport of Na(+) ions from the cytoplasm to the periplasm. NqrA to NqrE are probably involved in the second step, the conversion of ubisemiquinone to ubiquinol. This Vibrio vulnificus (strain CMCP6) protein is Na(+)-translocating NADH-quinone reductase subunit B.